We begin with the raw amino-acid sequence, 391 residues long: Chorismate synthase (391 aa).

Position 48 (R48) interacts with NADP(+). FMN-binding positions include 126–128 (RAS), G286, 301–305 (KPTSS), and R328.

Belongs to the chorismate synthase family. FMNH2 is required as a cofactor.

The enzyme catalyses 5-O-(1-carboxyvinyl)-3-phosphoshikimate = chorismate + phosphate. The protein operates within metabolic intermediate biosynthesis; chorismate biosynthesis; chorismate from D-erythrose 4-phosphate and phosphoenolpyruvate: step 7/7. In terms of biological role, catalyzes the anti-1,4-elimination of the C-3 phosphate and the C-6 proR hydrogen from 5-enolpyruvylshikimate-3-phosphate (EPSP) to yield chorismate, which is the branch point compound that serves as the starting substrate for the three terminal pathways of aromatic amino acid biosynthesis. This reaction introduces a second double bond into the aromatic ring system. The protein is Chorismate synthase of Saccharolobus islandicus (strain L.S.2.15 / Lassen #1) (Sulfolobus islandicus).